We begin with the raw amino-acid sequence, 477 residues long: PEP-dependent dihydroxyacetone kinase, phosphoryl donor subunit DhaM (477 aa).

A PTS EIIA type-4 domain is found at 1-135 (MIGLIIVSHS…QALQAKQQQL (135 aa)). Residue histidine 9 is the Tele-phosphohistidine intermediate of the active site. An HPr domain is found at 156 to 243 (ALTTQWVVKN…QLAQHNFGDN (88 aa)). The active-site Pros-phosphohistidine intermediate is the histidine 170. The tract at residues 269-477 (HAPNTELCIS…IETRSLIVAS (209 aa)) is PTS EI-like, N-terminal part. Histidine 435 serves as the catalytic Tele-phosphohistidine intermediate.

It belongs to the PEP-utilizing enzyme family. Homodimer. The dihydroxyacetone kinase complex is composed of a homodimer of DhaM, a homodimer of DhaK and the subunit DhaL.

The catalysed reaction is dihydroxyacetone + phosphoenolpyruvate = dihydroxyacetone phosphate + pyruvate. In terms of biological role, component of the dihydroxyacetone kinase complex, which is responsible for the phosphoenolpyruvate (PEP)-dependent phosphorylation of dihydroxyacetone. DhaM serves as the phosphoryl donor. Is phosphorylated by phosphoenolpyruvate in an EI- and HPr-dependent reaction, and a phosphorelay system on histidine residues finally leads to phosphoryl transfer to DhaL and dihydroxyacetone. This chain is PEP-dependent dihydroxyacetone kinase, phosphoryl donor subunit DhaM, found in Providencia stuartii (strain MRSN 2154).